Here is a 125-residue protein sequence, read N- to C-terminus: Small ribosomal subunit protein uS13 (125 aa).

The disordered stretch occupies residues 99–125 (RGQRTKTNARTRKGKRKTVANKKMAAK).

The protein belongs to the universal ribosomal protein uS13 family. As to quaternary structure, part of the 30S ribosomal subunit. Forms a loose heterodimer with protein S19. Forms two bridges to the 50S subunit in the 70S ribosome.

Located at the top of the head of the 30S subunit, it contacts several helices of the 16S rRNA. In the 70S ribosome it contacts the 23S rRNA (bridge B1a) and protein L5 of the 50S subunit (bridge B1b), connecting the 2 subunits; these bridges are implicated in subunit movement. Contacts the tRNAs in the A and P-sites. The chain is Small ribosomal subunit protein uS13 from Borrelia turicatae (strain 91E135).